Here is a 1237-residue protein sequence, read N- to C-terminus: ATP-dependent RNA helicase DEAH13 (1237 aa).

Disordered regions lie at residues 1 to 51 and 115 to 148; these read MASV…NSNV and AMQL…EPTT. A compositionally biased stretch (polar residues) spans 24 to 38; the sequence is SNKMQDKLNSNNNTG. Residues 131–143 show a composition bias toward acidic residues; it reads SVEQNDNDDDSCM. In terms of domain architecture, Helicase ATP-binding spans 251 to 443; sequence MEAINRHPAV…KRLFPNIPPL (193 aa). ATP is bound at residue 264–271; it reads GQTGCGKT. The DEAH box motif lies at 367-370; sequence DEAH. The interval 543–585 is disordered; the sequence is DDDSNNQNSRFSSHGEDPSDIGDGNYDDDFEEEDMYESDEDRD. Over residues 567–585 the composition is skewed to acidic residues; sequence NYDDDFEEEDMYESDEDRD. One can recognise a Helicase C-terminal domain in the interval 605–776; the sequence is ALRAAFNALA…GVILLMKSMN (172 aa). Residues 876 to 910 form a disordered region; it reads EKKNESKDADKTVKQEDKQRKKDRKEKIKAARDRF.

It belongs to the DEAD box helicase family. DEAH subfamily.

The catalysed reaction is ATP + H2O = ADP + phosphate + H(+). This chain is ATP-dependent RNA helicase DEAH13, found in Arabidopsis thaliana (Mouse-ear cress).